The chain runs to 250 residues: Histone H1.1 (250 aa).

Residues methionine 1–serine 11 show a composition bias toward polar residues. Disordered stretches follow at residues methionine 1–valine 52 and glutamine 104–lysine 250. In terms of domain architecture, H15 spans serine 44–alanine 118. Over residues lysine 122–lysine 133 the composition is skewed to basic and acidic residues. Positions alanine 140–alanine 161 are enriched in low complexity. Residues lysine 174 to lysine 191 show a composition bias toward basic and acidic residues. Residues threonine 192–lysine 234 are compositionally biased toward low complexity. Residues threonine 235–lysine 250 are compositionally biased toward basic residues.

The protein belongs to the histone H1/H5 family.

Its subcellular location is the nucleus. The protein resides in the chromosome. In terms of biological role, histones H1 are necessary for the condensation of nucleosome chains into higher-order structures. In Drosophila virilis (Fruit fly), this protein is Histone H1.1 (His1.1).